Reading from the N-terminus, the 1306-residue chain is Disease resistance protein Roq1 (1306 aa).

The region spanning 10 to 179 is the TIR domain; the sequence is RSYDVFLSFR…QILKDIFDKF (170 aa). Residues 19–24 and glycine 52 contribute to the NAD(+) site; that span reads RGEDTR. The active site involves glutamate 86. Residues 198–417 form the NB-ARC domain; the sequence is KKLSSLLRMD…IDRLKDNPEG (220 aa). 18 LRR repeats span residues 200 to 224, 252 to 275, 417 to 440, 599 to 622, 645 to 669, 670 to 693, 716 to 739, 741 to 763, 784 to 807, 808 to 831, 832 to 857, 878 to 902, 904 to 926, 927 to 949, 961 to 983, 987 to 1010, 1013 to 1036, and 1045 to 1070; these read LSSL…GVGK, LQHH…EFVD, GEIM…IFLD, PSKL…AKRL, ITNL…VGFL, KNLI…IQSE, MTHL…IEHL, SLEN…IWRF, SNCT…IGNL, TSLN…IWGL, TSLT…AINH, LDLL…IWML, FLRI…LGHL, EHLE…VARL, FAIG…VFGS, LGSV…MNQL, LEYL…SIKE, and LRIM…EYQN.

The protein belongs to the disease resistance TIR-NB-LRR family. Homodimer.

The enzyme catalyses NAD(+) + H2O = ADP-D-ribose + nicotinamide + H(+). The catalysed reaction is NAD(+) = 2'cADPR + nicotinamide + H(+). Its function is as follows. Disease resistance (R) protein that specifically recognizes the Xanthomonas and Pseudomonas effector proteins XopQ and HopQ1, and triggers cell death. An NAD(+) hydrolase (NADase): in response to activation, catalyzes cleavage of NAD(+) into ADP-D-ribose (ADPR) and nicotinamide; NAD(+) cleavage triggers a defense system that promotes cell death. Makes small amounts of 2' cyclic ADPR (2'cADPR). This Nicotiana benthamiana protein is Disease resistance protein Roq1.